The sequence spans 341 residues: Putative UPF0607 protein FLJ37424 (341 aa).

Disordered stretches follow at residues 72–131 (PKTE…NPRP) and 216–283 (GLLM…LPCL). The span at 79–101 (EEPKEATEVKDQVETQGQEDNKR) shows a compositional bias: basic and acidic residues. Residues 108-127 (EAASTSRPLETQGNLTSSWY) show a composition bias toward polar residues. The span at 243 to 252 (AGHRSHKRKL) shows a compositional bias: basic residues.

Belongs to the UPF0607 family.

This Homo sapiens (Human) protein is Putative UPF0607 protein FLJ37424.